The following is a 1007-amino-acid chain: Protocadherin alpha-C2 (1007 aa).

Positions 1 to 42 (MEQAGTRPAATEHPRLRRPMPWLLLLPLLLLLLLLLPGPAAS) are cleaved as a signal peptide. 5 Cadherin domains span residues 43-148 (QLRY…SPRF), 149-257 (PRPN…SPAF), 258-365 (DQST…APEV), 374-469 (VPEN…PPSF), and 470-579 (LEDS…APHI). Residues 43 to 708 (QLRYSVPEEQ…RTYSEITLYL (666 aa)) are Extracellular-facing. 2 N-linked (GlcNAc...) asparagine glycosylation sites follow: Asn280 and Asn436. Residues Asn586 and Asn657 are each glycosylated (N-linked (GlcNAc...) asparagine). Residues 594–691 (VPRTAPAGYL…DRVSKILPDT (98 aa)) enclose the Cadherin 6 domain. Residues 709–729 (IIALSTVSFIFLLTIIILSII) traverse the membrane as a helical segment. Residues 730 to 1007 (KCYRYTAYGT…GNSTTDNSDQ (278 aa)) lie on the Cytoplasmic side of the membrane. PXXP repeat units lie at residues 856 to 859 (PRQP), 889 to 892 (PGGP), 930 to 933 (PGNP), and 948 to 951 (PGSP). Positions 856–951 (PRQPNPDWRY…PDKFIIPGSP (96 aa)) are 4 X 4 AA repeats of P-X-X-P. Positions 885 to 1007 (LRAGPGGPDQ…GNSTTDNSDQ (123 aa)) are disordered. The span at 966–980 (DKSDFITFGKKEETK) shows a compositional bias: basic and acidic residues.

The protein localises to the cell membrane. In terms of biological role, potential calcium-dependent cell-adhesion protein. May be involved in the establishment and maintenance of specific neuronal connections in the brain. This is Protocadherin alpha-C2 (PCDHAC2) from Homo sapiens (Human).